The chain runs to 177 residues: Large ribosomal subunit protein uL6 (177 aa).

It belongs to the universal ribosomal protein uL6 family. As to quaternary structure, part of the 50S ribosomal subunit.

Functionally, this protein binds to the 23S rRNA, and is important in its secondary structure. It is located near the subunit interface in the base of the L7/L12 stalk, and near the tRNA binding site of the peptidyltransferase center. The polypeptide is Large ribosomal subunit protein uL6 (Herminiimonas arsenicoxydans).